The primary structure comprises 351 residues: Ca(2+)/H(+) antiporter ChaA (351 aa).

11 consecutive transmembrane segments (helical) span residues 4-24 (IFFILVAAGVPLSVIGSLMHW), 25-45 (PSAVLFAVYCVTIIALASYMG), 59-79 (IGGLLNATFGNAVELIISLFA), 86-106 (GIVLASLTGSVLGNLLLVAGL), 130-150 (GLLIFAIIVAFVIPEVFSVGM), 156-176 (LNLSIGISIIMILLYVAALYF), 205-225 (VATIVLFAATIVVAYISENLV), 241-261 (FIGVIIVAIVGNAAEHASAII), 282-302 (IAMFVAPVLVICSIFFPTSMP), 303-323 (LVFTLPELVAMVSAVLLMIAI), and 331-351 (WFEGATLLAAYVIMAIGFFLL).

It belongs to the Ca(2+):cation antiporter (CaCA) (TC 2.A.19) family. Cation/proton exchanger (CAX) subfamily. Homotrimer.

Its subcellular location is the cell membrane. Calcium efflux is tightly regulated by intracellular pH. Ca(+)/H(+) antiporter that extrudes calcium in exchange for external protons. Does not transport sodium or potassium. The chain is Ca(2+)/H(+) antiporter ChaA (chaA) from Bacillus subtilis (strain 168).